We begin with the raw amino-acid sequence, 346 residues long: Ketol-acid reductoisomerase (NADP(+)) (346 aa).

The KARI N-terminal Rossmann domain maps to 1-189 (MQVYYDRDAD…GGGRSGIIET (189 aa)). Residues 24–27 (YGSQ), Arg-48, Ser-51, Thr-53, and 83–86 (DEHQ) each bind NADP(+). Residue His-108 is part of the active site. Gly-134 serves as a coordination point for NADP(+). The 146-residue stretch at 190 to 335 (TFKEECETDL…EKLRAMMPWI (146 aa)) folds into the KARI C-terminal knotted domain. Asp-198, Glu-202, Glu-234, and Glu-238 together coordinate Mg(2+). Ser-259 serves as a coordination point for substrate.

This sequence belongs to the ketol-acid reductoisomerase family. Mg(2+) is required as a cofactor.

It catalyses the reaction (2R)-2,3-dihydroxy-3-methylbutanoate + NADP(+) = (2S)-2-acetolactate + NADPH + H(+). The catalysed reaction is (2R,3R)-2,3-dihydroxy-3-methylpentanoate + NADP(+) = (S)-2-ethyl-2-hydroxy-3-oxobutanoate + NADPH + H(+). It participates in amino-acid biosynthesis; L-isoleucine biosynthesis; L-isoleucine from 2-oxobutanoate: step 2/4. Its pathway is amino-acid biosynthesis; L-valine biosynthesis; L-valine from pyruvate: step 2/4. Involved in the biosynthesis of branched-chain amino acids (BCAA). Catalyzes an alkyl-migration followed by a ketol-acid reduction of (S)-2-acetolactate (S2AL) to yield (R)-2,3-dihydroxy-isovalerate. In the isomerase reaction, S2AL is rearranged via a Mg-dependent methyl migration to produce 3-hydroxy-3-methyl-2-ketobutyrate (HMKB). In the reductase reaction, this 2-ketoacid undergoes a metal-dependent reduction by NADPH to yield (R)-2,3-dihydroxy-isovalerate. The protein is Ketol-acid reductoisomerase (NADP(+)) of Sphingopyxis alaskensis (strain DSM 13593 / LMG 18877 / RB2256) (Sphingomonas alaskensis).